We begin with the raw amino-acid sequence, 180 residues long: Ribulose bisphosphate carboxylase small subunit, chloroplastic (180 aa).

The transit peptide at 1-56 (MALISSAAVTTVNRASSAQANLVAPFTGLKSSAGFPVTKKTNNDITSIASNGGRVN) directs the protein to the chloroplast.

Belongs to the RuBisCO small chain family. In terms of assembly, heterohexadecamer of 8 large and 8 small subunits.

Its subcellular location is the plastid. The protein localises to the chloroplast. In terms of biological role, ruBisCO catalyzes two reactions: the carboxylation of D-ribulose 1,5-bisphosphate, the primary event in carbon dioxide fixation, as well as the oxidative fragmentation of the pentose substrate. Both reactions occur simultaneously and in competition at the same active site. Although the small subunit is not catalytic it is essential for maximal activity. The protein is Ribulose bisphosphate carboxylase small subunit, chloroplastic of Medicago sativa (Alfalfa).